A 157-amino-acid chain; its full sequence is Endoribonuclease YbeY (157 aa).

Residues His111, His115, and His121 each contribute to the Zn(2+) site. The segment at 136–157 is disordered; that stretch reads ELLAELGHPDPYADDETDSITH. Over residues 147-157 the composition is skewed to acidic residues; sequence YADDETDSITH.

This sequence belongs to the endoribonuclease YbeY family. Requires Zn(2+) as cofactor.

Its subcellular location is the cytoplasm. Functionally, single strand-specific metallo-endoribonuclease involved in late-stage 70S ribosome quality control and in maturation of the 3' terminus of the 16S rRNA. The polypeptide is Endoribonuclease YbeY (Pseudomonas putida (strain ATCC 700007 / DSM 6899 / JCM 31910 / BCRC 17059 / LMG 24140 / F1)).